The following is a 752-amino-acid chain: Coiled-coil domain-containing protein 157 (752 aa).

A compositionally biased stretch (polar residues) spans 135–154 (QQPLPQKGANQRETPTSKPT). 2 disordered regions span residues 135 to 163 (QQPLPQKGANQRETPTSKPTTKGEPARSP) and 316 to 336 (QALKQEQGARRRQAEEDEQCL). Coiled coils occupy residues 276-544 (AAEQ…LLVA) and 579-615 (DHMERQVQSNDIRIRVLQEENGRLQSMLSKIREVAQQ). Residues 316-329 (QALKQEQGARRRQA) are compositionally biased toward basic and acidic residues. Disordered regions lie at residues 620–707 (LIPQ…QPSK) and 731–752 (RKRLSPGRGQASSAHQPQERPM). A compositionally biased stretch (polar residues) spans 628–648 (SPSSKGTQGATPPVQAKSTSP). Residues 671–692 (TSPPRQPCTSPPRQPCTSPPRQ) show a composition bias toward pro residues. The span at 693 to 707 (PCTSPSRQPCSQPSK) shows a compositional bias: polar residues.

In Homo sapiens (Human), this protein is Coiled-coil domain-containing protein 157 (CCDC157).